Reading from the N-terminus, the 154-residue chain is NADPH-dependent 7-cyano-7-deazaguanine reductase (154 aa).

Residues 1–21 (MPNTDVSSLSMLGHQTETASS) show a composition bias toward polar residues. The interval 1–26 (MPNTDVSSLSMLGHQTETASSPEEAV) is disordered. The Thioimide intermediate role is filled by Cys52. Asp59 acts as the Proton donor in catalysis. Substrate-binding positions include 74–76 (VES) and 93–94 (HE).

Belongs to the GTP cyclohydrolase I family. QueF type 1 subfamily.

It localises to the cytoplasm. It catalyses the reaction 7-aminomethyl-7-carbaguanine + 2 NADP(+) = 7-cyano-7-deazaguanine + 2 NADPH + 3 H(+). Its pathway is tRNA modification; tRNA-queuosine biosynthesis. Catalyzes the NADPH-dependent reduction of 7-cyano-7-deazaguanine (preQ0) to 7-aminomethyl-7-deazaguanine (preQ1). The chain is NADPH-dependent 7-cyano-7-deazaguanine reductase from Rhizobium etli (strain ATCC 51251 / DSM 11541 / JCM 21823 / NBRC 15573 / CFN 42).